The primary structure comprises 498 residues: Putative phosphotransferase 057R (498 aa).

This Dryophytes versicolor (chameleon treefrog) protein is Putative phosphotransferase 057R.